A 317-amino-acid polypeptide reads, in one-letter code: Membrane-associated protein VIPP1, chloroplastic (317 aa).

The stretch at 92 to 246 (EMNDDLTKMR…SQAEALGQLA (155 aa)) forms a coiled coil. Residues 265–317 (DLAQMKKEISGSSSKGELPPGRTAVSNSGAARPFRDIEIENELNELRKKANEY) form a disordered region. A compositionally biased stretch (basic and acidic residues) spans 297–317 (PFRDIEIENELNELRKKANEY).

Belongs to the PspA/Vipp/IM30 family. In terms of assembly, homomultimer. Complex formation involves interaction via the central alpha-helical domain (71-286). As to quaternary structure, (Microbial infection) Interacts with the rice tungro bacilliform virus (RTBV) capsid protein.

The protein resides in the plastid. The protein localises to the chloroplast inner membrane. It localises to the chloroplast thylakoid membrane. In terms of biological role, required for plastid vesicle formation and thylakoid membrane biogenesis, but not for functional assembly of thylakoid protein complexes. The protein is Membrane-associated protein VIPP1, chloroplastic of Oryza sativa subsp. japonica (Rice).